Reading from the N-terminus, the 198-residue chain is Protein GrpE (198 aa).

The interval 1–58 (MTEKDQSVNNEEFAEKEDNTAKDSNTDEQIEKTASEDDVQNDSSAVDDKEKEIQQLKE) is disordered. Composition is skewed to basic and acidic residues over residues 16–35 (KEDN…KTAS) and 46–58 (VDDK…QLKE).

This sequence belongs to the GrpE family. Homodimer.

It is found in the cytoplasm. Functionally, participates actively in the response to hyperosmotic and heat shock by preventing the aggregation of stress-denatured proteins, in association with DnaK and GrpE. It is the nucleotide exchange factor for DnaK and may function as a thermosensor. Unfolded proteins bind initially to DnaJ; upon interaction with the DnaJ-bound protein, DnaK hydrolyzes its bound ATP, resulting in the formation of a stable complex. GrpE releases ADP from DnaK; ATP binding to DnaK triggers the release of the substrate protein, thus completing the reaction cycle. Several rounds of ATP-dependent interactions between DnaJ, DnaK and GrpE are required for fully efficient folding. This is Protein GrpE from Staphylococcus carnosus (strain TM300).